Reading from the N-terminus, the 82-residue chain is Large ribosomal subunit protein bL31B (82 aa).

It belongs to the bacterial ribosomal protein bL31 family. Type B subfamily. In terms of assembly, part of the 50S ribosomal subunit.

The protein is Large ribosomal subunit protein bL31B of Pectobacterium carotovorum subsp. carotovorum (strain PC1).